The sequence spans 494 residues: Glutamyl-tRNA(Gln) amidotransferase subunit A (494 aa).

Catalysis depends on charge relay system residues lysine 79 and serine 159. Serine 183 serves as the catalytic Acyl-ester intermediate.

It belongs to the amidase family. GatA subfamily. As to quaternary structure, heterotrimer of A, B and C subunits.

It carries out the reaction L-glutamyl-tRNA(Gln) + L-glutamine + ATP + H2O = L-glutaminyl-tRNA(Gln) + L-glutamate + ADP + phosphate + H(+). In terms of biological role, allows the formation of correctly charged Gln-tRNA(Gln) through the transamidation of misacylated Glu-tRNA(Gln) in organisms which lack glutaminyl-tRNA synthetase. The reaction takes place in the presence of glutamine and ATP through an activated gamma-phospho-Glu-tRNA(Gln). The sequence is that of Glutamyl-tRNA(Gln) amidotransferase subunit A from Bartonella tribocorum (strain CIP 105476 / IBS 506).